The chain runs to 150 residues: Monooxygenase nsrS (150 aa).

This sequence belongs to the avfA family.

Its pathway is secondary metabolite biosynthesis. In terms of biological role, monooxygenase; part of the gene cluster that mediates the biosynthesis of the tetrahydroxanthone dimer neosartorin, which exhibits antibacterial activity. The two different monomeric units appear to be synthesized by the same set of enzymes, among which the Baeyer-Villiger monooxygenase nsrF is the key enzyme for the divergence of the biosynthetic routes. The pathway begins with the synthesis of atrochrysone thioester by the polyketide synthase nsrB. The atrochrysone carboxyl ACP thioesterase nsrC then breaks the thioester bond and releases the atrochrysone carboxylic acid from AacuL. Atrochrysone carboxylic acid is decarboxylated by the decarboxylase nsrE, and oxidized by the anthrone oxygenase nsrD to yield emodin. Emodin is then reduced to emodin hydroquinone by the oxidoreductase nsrR. A-ring reduction by the short chain dehydrogenase nsrJ, dehydration by the scytalone dehydratase-like protein nsrI and probable spontaneous re-oxidation, results in overall deoxygenation to chrysophanol. The Baeyer-Villiger monooxygenase nsrF accepts chrysophanol as a substrate to insert one oxygen atom at two different positions to yield the precursors of both monomric units. NsrF is promiscuous/flexible in interacting with the 2 (non methylated and methylated) aromatic rings of chrysophanol, thus diverging the biosynthetic pathway at this point. After the hydrolysis of the lactones, methylesterification by the methyltransferase nsrG yields respectively moniliphenone and 2,2',6'-trihydroxy-4-methyl-6-methoxya-cyldiphenylmethanone. The next steps are the hydroxylation by the FAD-dependent monooxygenase nsrK, followed by isomerization by the monooxygenase nsrQ. The short chain dehydrogenase/reductase nsrO then catalyzes the C-5 ketoreduction to give the xanthone skeleton of blennolide C and 5-acetylblennolide A. The acetyltransferase nsrL has a strict substrate specificity and uses only blennolide A but not blennolide C to yield 5-acetylblennolide A as the single-acetylated product. In the final step of the biosynthesis, the heterodimerization of the 2 xanthones, blennolide C and 5-acetylblennolide A, is catalyzed by the cytochrome P450 monooxygenase nsrP. NsrP can utilize at least three different xanthones as its substrates to perform the dimerization reaction. This chain is Monooxygenase nsrS, found in Aspergillus novofumigatus (strain IBT 16806).